Consider the following 310-residue polypeptide: Calcium homeostasis modulator protein 5 (310 aa).

4 helical membrane passes run 17–37 (TIGY…FSMV), 49–69 (FPYG…VGFF), 101–121 (LIKV…VALL), and 181–201 (QILG…GTCY).

This sequence belongs to the CALHM family.

The protein resides in the membrane. Pore-forming subunit of a voltage-gated ion channel. The sequence is that of Calcium homeostasis modulator protein 5 (calhm5.1) from Danio rerio (Zebrafish).